A 130-amino-acid chain; its full sequence is Small ribosomal subunit protein uS9 (130 aa).

This sequence belongs to the universal ribosomal protein uS9 family.

This chain is Small ribosomal subunit protein uS9, found in Pseudomonas putida (strain W619).